The sequence spans 216 residues: HTH-type transcriptional regulator EthR (216 aa).

Positions 1–10 (MTTSAASQAS) are enriched in polar residues. A disordered region spans residues 1 to 24 (MTTSAASQASLPRGRRTARPSGDD). The HTH tetR-type domain occupies 23–83 (DDRELAILAT…TLLDRVVNQA (61 aa)). Positions 46-65 (SVDDLAKGAGISRPTFYFYF) form a DNA-binding region, H-T-H motif.

In terms of assembly, homodimer.

In terms of biological role, involved in the repression of the monooxygenase EthA which is responsible of the formation of the active metabolite of ethionamide (ETH). This is HTH-type transcriptional regulator EthR (ethR) from Mycobacterium bovis (strain ATCC BAA-935 / AF2122/97).